A 474-amino-acid polypeptide reads, in one-letter code: Hepatocyte nuclear factor 4-alpha (474 aa).

Positions 57–132 (SALCAICGDR…AGMKKEAVQN (76 aa)) form a DNA-binding region, nuclear receptor. NR C4-type zinc fingers lie at residues 60-80 (CAIC…CDGC) and 96-120 (CRFS…LKKC). 2 positions are modified to phosphoserine; by PKA: serine 142 and serine 143. Phosphotyrosine is present on tyrosine 144. Residues 147–377 (SSLPSINALL…NLLQEMLLGG (231 aa)) enclose the NR LBD domain. At threonine 166 the chain carries Phosphothreonine. Residue serine 167 is modified to Phosphoserine. Glycyl lysine isopeptide (Lys-Gly) (interchain with G-Cter in ubiquitin) cross-links involve residues lysine 234 and lysine 307. Serine 313 is modified (phosphoserine; by AMPK). Positions 368 to 376 (NLLQEMLLG) match the 9aaTAD motif. Residues 413-450 (SNGQMCEWPRPRGQAATPETPQPSPPSGSGSESYKLLP) are disordered. 2 positions are modified to phosphothreonine: threonine 429 and threonine 432. Residue serine 436 is modified to Phosphoserine. Lysine 458 is subject to N6-acetyllysine.

The protein belongs to the nuclear hormone receptor family. NR2 subfamily. As to quaternary structure, homodimerization is required for HNF4-alpha to bind to its recognition site. Interacts with CLOCK, BMAL1, CRY1, CRY2, PER1 and PER2. Interacts with NR0B2/SHP; the resulting heterodimer is transcriptionally inactive. Interacts with DDX3X; this interaction disrupts the interaction between HNF4 and NR0B2 that forms inactive heterodimers and enhances the formation of active HNF4 homodimers. Phosphorylation at Ser-313 by AMPK reduces the ability to form homodimers and bind DNA. Phosphorylated in the recognition sequence R-R-S-S near the DNA-binding domain; phosphorylation results in decrease in DNA-binding activity. Phosphorylation of HNF4 depends on the diet and is decreased by a carbohydrate-rich diet and is increased by fasting. Post-translationally, the N-terminus is blocked. In terms of processing, acetylation at Lys-458 lowers transcriptional activation by about two-fold. As to expression, liver, kidney and intestine.

Its subcellular location is the nucleus. Transcriptional regulator which controls the expression of hepatic genes during the transition of endodermal cells to hepatic progenitor cells, facilitating the recruitment of RNA pol II to the promoters of target genes. Activates the transcription of CYP2C38. Represses the CLOCK-BMAL1 transcriptional activity and is essential for circadian rhythm maintenance and period regulation in the liver and colon cells. The chain is Hepatocyte nuclear factor 4-alpha (Hnf4a) from Rattus norvegicus (Rat).